The following is an 805-amino-acid chain: Angiotensin-converting enzyme 2 (805 aa).

A signal peptide spans 1–17 (MSGSSWLLLSLVAVTAA). The Extracellular segment spans residues 18 to 740 (QSTIEEQAKT…LGPPNQPPVS (723 aa)). The Peptidase M2 domain occupies 19–607 (STIEEQAKTF…QNKNSFVGWS (589 aa)). N-linked (GlcNAc...) asparagine glycosylation is found at asparagine 53, asparagine 90, and asparagine 103. The cysteines at positions 133 and 141 are disulfide-linked. Arginine 169 provides a ligand contact to chloride. Arginine 273 contributes to the substrate binding site. Asparagine 322 carries an N-linked (GlcNAc...) asparagine glycan. Cysteine 344 and cysteine 361 are oxidised to a cystine. 345 to 346 (HP) is a binding site for substrate. Histidine 374 contributes to the Zn(2+) binding site. Glutamate 375 serves as the catalytic Proton acceptor. Zn(2+) contacts are provided by histidine 378 and glutamate 402. An N-linked (GlcNAc...) asparagine glycan is attached at asparagine 432. Residues tryptophan 477 and lysine 481 each contribute to the chloride site. The active-site Proton donor is the histidine 505. Tyrosine 515 is a substrate binding site. Cysteine 530 and cysteine 542 form a disulfide bridge. The N-linked (GlcNAc...) asparagine glycan is linked to asparagine 546. The Collectrin-like domain occupies 614-805 (ADQSIKVRIS…QNTDDVQTSF (192 aa)). The interval 652–659 (RKYFLEVK) is essential for cleavage by ADAM17. Asparagine 690 carries an N-linked (GlcNAc...) asparagine glycan. Residues 697–716 (RTEVEKAIRMSRSRINDAFR) form an essential for cleavage by TMPRSS11D and TMPRSS2 region. The helical transmembrane segment at 741–761 (IWLIVFGVVMGVIVVGIVVLI) threads the bilayer. The Cytoplasmic segment spans residues 762-805 (FTGIRDRKKKNKARNEENPYASIDISKGENNPGFQNTDDVQTSF). Positions 772 to 805 (NKARNEENPYASIDISKGENNPGFQNTDDVQTSF) are disordered. Residues 778–786 (ENPYASIDI) carry the LIR motif. Position 781 is a phosphotyrosine (tyrosine 781). Positions 781–784 (YASI) match the Endocytic sorting signal motif. Positions 781–785 (YASID) match the SH2-binding motif. At serine 783 the chain carries Phosphoserine. Residue lysine 788 forms a Glycyl lysine isopeptide (Lys-Gly) (interchain with G-Cter in ubiquitin) linkage. Positions 789 to 805 (GENNPGFQNTDDVQTSF) are enriched in polar residues. Positions 792–795 (NPGF) match the PTB motif. The short motif at 803–805 (TSF) is the PDZ-binding element.

The protein belongs to the peptidase M2 family. As to quaternary structure, homodimer. Interacts with the catalytically active form of TMPRSS2. Interacts with SLC6A19; this interaction is essential for expression and function of SLC6A19 in intestine. Interacts with ITGA5:ITGB1. Probably interacts (via endocytic sorting signal motif) with AP2M1; the interaction is inhibited by phosphorylation of Tyr-781. Interacts (via PDZ-binding motif) with NHERF1 (via PDZ domains); the interaction may enhance ACE2 membrane residence. Requires Zn(2+) as cofactor. It depends on chloride as a cofactor. Post-translationally, proteolytic cleavage by ADAM17 generates a secreted form. Also cleaved by serine proteases: TMPRSS2, TMPRSS11D and HPN/TMPRSS1. In terms of processing, phosphorylated. Phosphorylation at Tyr-781 probably inhibits interaction with AP2M1 and enables interactions with proteins containing SH2 domains. Ubiquitinated. Ubiquitinated on Lys-788 via 'Lys-48'-linked ubiquitin. 'Lys-48'-linked deubiquitinated by USP50 on the Lys-788; leading to its stabilization.

The protein resides in the secreted. The protein localises to the cell membrane. Its subcellular location is the cytoplasm. It localises to the cell projection. It is found in the cilium. The protein resides in the apical cell membrane. It carries out the reaction angiotensin II + H2O = angiotensin-(1-7) + L-phenylalanine. The catalysed reaction is angiotensin I + H2O = angiotensin-(1-9) + L-leucine. It catalyses the reaction bradykinin(1-8) + H2O = bradykinin(1-7) + L-phenylalanine. The enzyme catalyses neurotensin + H2O = neurotensin-(1-12) + L-leucine. It carries out the reaction kinetensin + H2O = kinetensin-(1-8) + L-leucine. The catalysed reaction is dynorphin A-(1-13) + H2O = dynorphin A-(1-12) + L-lysine. It catalyses the reaction apelin-13 + H2O = apelin-12 + L-phenylalanine. The enzyme catalyses [Pyr1]apelin-13 + H2O = [Pyr1]apelin-12 + L-phenylalanine. It carries out the reaction apelin-17 + H2O = apelin-16 + L-phenylalanine. In terms of biological role, essential counter-regulatory carboxypeptidase of the renin-angiotensin hormone system that is a critical regulator of blood volume, systemic vascular resistance, and thus cardiovascular homeostasis. Converts angiotensin I to angiotensin 1-9, a nine-amino acid peptide with anti-hypertrophic effects in cardiomyocytes, and angiotensin II to angiotensin 1-7, which then acts as a beneficial vasodilator and anti-proliferation agent, counterbalancing the actions of the vasoconstrictor angiotensin II. Also removes the C-terminal residue from three other vasoactive peptides, neurotensin, kinetensin, and des-Arg bradykinin, but is not active on bradykinin. Also cleaves other biological peptides, such as apelins, casomorphins and dynorphin A. Plays an important role in amino acid transport by acting as binding partner of amino acid transporter SLC6A19 in intestine, regulating trafficking, expression on the cell surface, and its catalytic activity. In Pongo abelii (Sumatran orangutan), this protein is Angiotensin-converting enzyme 2 (ACE2).